Here is a 245-residue protein sequence, read N- to C-terminus: Hydrolase pyvD (245 aa).

Catalysis depends on residues Cys133, Asp179, and His211.

It belongs to the dienelactone hydrolase family.

The protein operates within secondary metabolite biosynthesis. Hydrolase; part of the gene cluster that mediates the biosynthesis of pyranoviolin A, a pyranonigrin analog with a C-3 methoxy group. Initially, the PKS portion of pyvA synthesizes C-10 carbon chain from 5 molecules of malonyl-CoA, which is then condensed with the thiolation (T) domain-bound glycine activated by the adenylation (A) domain. The subsequent chain release by Dieckmann condensation (DKC) could be catalyzed by the TE domain present at the C-terminus of pyvA and/or the alpha/beta hydrolase pyvD, installing the tetramic acid moiety. The FAD-dependent monooxygenase pyvC next epoxidizes one of the olefins of the polyketide part, and the epoxide ring-opening induces the dihydro-gamma-pyrone ring formation. The cytochrome P450 monooxygeanse pyvB would be responsible for the 2 consecutive reactions, in which the dihydro-gamma-pyrone is oxidized to gamma-pyrone and C-7 is hydroxylated to yield pyranonigrin F. Finally, the O-methyltransferase pyvH methylates the C-3 hydroxy group to complete the biosynthesis. The protein is Hydrolase pyvD of Aspergillus violaceofuscus (strain CBS 115571).